Here is a 390-residue protein sequence, read N- to C-terminus: Coiled-coil domain-containing protein 85C (390 aa).

2 coiled-coil regions span residues 26-86 (KEEL…RELC) and 116-146 (KEVG…KEII). The interval 153 to 237 (RNGPGSRSSI…RSIPNGLNDS (85 aa)) is disordered. Residues 157 to 172 (GSRSSIDSQNSLTNLN) show a composition bias toward polar residues. Over residues 182–194 (DGSSTSSTGSAGS) the composition is skewed to low complexity.

The protein belongs to the CCDC85 family.

The protein resides in the cell junction. It localises to the tight junction. The protein localises to the adherens junction. Its function is as follows. May play a role in cell-cell adhesion and epithelium development. May play an important role in cortical development, especially in the maintenance of radial glia. The sequence is that of Coiled-coil domain-containing protein 85C (ccdc85c) from Xenopus laevis (African clawed frog).